Here is a 363-residue protein sequence, read N- to C-terminus: Cytochrome b (363 aa).

4 consecutive transmembrane segments (helical) span residues 24–44 (VGFS…CLAW), 68–90 (FVIR…IHIF), 105–125 (VWFI…IGYV), and 171–191 (LHVL…LHLF). Residues His74 and His88 each contribute to the heme b site. Heme b contacts are provided by His175 and His189. An a ubiquinone-binding site is contributed by His194. 4 helical membrane passes run 219–239 (FYLR…YVIF), 287–307 (FLMV…ILWF), 321–341 (LILF…VLAY), and 342–362 (PIWM…VCRL).

This sequence belongs to the cytochrome b family. In terms of assembly, the main subunits of complex b-c1 are: cytochrome b, cytochrome c1 and the Rieske protein. The cofactor is heme b.

Its subcellular location is the mitochondrion inner membrane. Functionally, component of the ubiquinol-cytochrome c reductase complex (complex III or cytochrome b-c1 complex) that is part of the mitochondrial respiratory chain. The b-c1 complex mediates electron transfer from ubiquinol to cytochrome c. Contributes to the generation of a proton gradient across the mitochondrial membrane that is then used for ATP synthesis. This chain is Cytochrome b (MT-CYB), found in Trypanosoma brucei brucei.